We begin with the raw amino-acid sequence, 871 residues long: MILFDKNKRILKKYAKMVSKINQIESDLRSKKNSELIRLSMVLKEKVNSFEDADEHLFEAFALVREAARRTLGMRPFDVQVMGGIALHEGKVAEMKTGEGKTLAATMPIYLNALIGKGVHLVTVNDYLARRDALWMGPVYLFLGLRVGVINSLGKSYEVVWKNPDLARKAIEENWSVWPDGFNGEVLKEESMNKEAVEAFQVELKEITRKEAYLCDVTYGTNNEFGFDYLRDNLVLDYNDKVQRGHFYAIVDEADSVLIDEARTPLIISGPSKESPSVYRRFAQIAKKFVKDKDFTVDEKARTIILTEEGVAKAEKIIGVENLYDPGNVSLLYHLINALKALHLFKKDVDYVVMNGEVIIVDEFTGRLLPGRRYSGGLHQAIEAKEGVPIKEESITYATITFQNYFRMYEKLAGMTGTAKTEESEFVQVYGMEVVVIPTHKPMIRKDHDDLVFRTQKEKYEKIVEEIEKRYKKGQPVLVGTTSIEKSELLSSILKKKGIPHQVLNAKYHEKEAEIVAKAGQKGMVTIATNMAGRGTDIKLGPGVAELGGLCIIGTERHESRRIDNQLRGRTGRQGDPGESIFFLSLEDDLLRIFGSEQIGKVMNILKIEEGQPIQHPMLSKLIENIQKKVEGINFSIRKTLMEMDDVLDKQRRAVYSLRDQILLEKDYDEYLKDIFEDVVSTRVEEFCSGKNWDIESLKNSLSFFPAGLFDLDEKQFSSSEELHDYLFNRLWEEYQRKKQEIGEDYRKVIRFLMLRIIDDHWRRYLEEVEHVKEAVQLRSYGQKDPIVEFKKETYYMFDEMMRRINDTIANYVLRVVKVSEKDEKEAKEELGKIRLVHEEFNLVNRAMRRATEKKKKKDGLHSFGRIRVKR.

ATP contacts are provided by residues Gln80, 98 to 102, and Asp537; that span reads GEGKT.

It belongs to the SecA family. In terms of assembly, monomer and homodimer. Part of the essential Sec protein translocation apparatus which comprises SecA, SecYEG and auxiliary proteins SecDF. Other proteins may also be involved.

Its subcellular location is the cell inner membrane. The protein resides in the cytoplasm. It catalyses the reaction ATP + H2O + cellular proteinSide 1 = ADP + phosphate + cellular proteinSide 2.. Its function is as follows. Part of the Sec protein translocase complex. Interacts with the SecYEG preprotein conducting channel. Has a central role in coupling the hydrolysis of ATP to the transfer of proteins into and across the cell membrane, serving as an ATP-driven molecular motor driving the stepwise translocation of polypeptide chains across the membrane. This chain is Protein translocase subunit SecA, found in Thermotoga sp. (strain RQ2).